Consider the following 194-residue polypeptide: MGVAPVSNQPLVAQQPKGIIDPSTGKPIGSNDAFFGEINNELADKGFLVTSTDELINWARTGSLMWMTFGLACCAVEMMQLSMPRYDVERFGFAPRASPRQSDVMIVAGTLTNKMAPALRKVYDQMPEPRYVISMGSCANGGGYYHYSYSVVRGCDRIVPIDIYVPGCPPTAEALLYGVLLLQKKIRRTGTIER.

Positions 73, 74, 138, and 168 each coordinate [4Fe-4S] cluster.

Belongs to the complex I 20 kDa subunit family. NDH-1 is composed of 14 different subunits. Subunits NuoB, C, D, E, F, and G constitute the peripheral sector of the complex. The cofactor is [4Fe-4S] cluster.

The protein localises to the cell inner membrane. The catalysed reaction is a quinone + NADH + 5 H(+)(in) = a quinol + NAD(+) + 4 H(+)(out). In terms of biological role, NDH-1 shuttles electrons from NADH, via FMN and iron-sulfur (Fe-S) centers, to quinones in the respiratory chain. The immediate electron acceptor for the enzyme in this species is believed to be ubiquinone. Couples the redox reaction to proton translocation (for every two electrons transferred, four hydrogen ions are translocated across the cytoplasmic membrane), and thus conserves the redox energy in a proton gradient. This is NADH-quinone oxidoreductase subunit B from Rhizobium leguminosarum bv. trifolii (strain WSM2304).